The following is a 586-amino-acid chain: MRFKSAYNGILTKDDIGKEVKLAGWVLRRRDHGGVIFVDLRDRTGFVQIVFNPEISKEAHNDAQDLRSEYVISVEGKIRARSPEMINPKIPTGEIEVMVEKMELLNTSETPPFLLEDDIDTGEDIRLKYRYLDLRRPTVFNNLYKRFQITNAFRKHLSDNGFIDVETPILNKSTPEGARDFLVPSRLNAGDFYALPQSPQIFKQILMIGGFDRYYQIAKCFRDEDLRADRQPEFTQVDIETSFLNTDEFLSIMENVTANIVKDVYGIDLPTPFPRLNYYDAMEMYGSDKPDTRFELKLINVEDAVRGCDFAVFKNALDNKFIIRCLNAKGGEKLSRKDIDDFTKYVGIFGAKGLAWMRVTDKGLESNIVKFFSEENQKKILEVTKAEKGDLLFFVADTPKVTFDALGNLRLRVAEKLNLIDKDKLNFLWVVEFPLFEYDHKEKRISATHHPFTAPVPEDVAILESEPLKVRSDTYDLVLNGNEIGGGGQRIYDSKVQAIIFKLLGIDEEKAKLRFGFLLDALKYGAPPMCGMAYGIDRVVMLLQKQDSIREVIAFPKTQKGQCLMSGCPSTVDADQLEELHLSIEE.

Glu-176 provides a ligand contact to L-aspartate. The aspartate stretch occupies residues 200–203 (QIFK). Arg-222 is a binding site for L-aspartate. ATP-binding positions include 222 to 224 (RDE) and Gln-231. His-449 serves as a coordination point for L-aspartate. ATP is bound at residue Glu-483. An L-aspartate-binding site is contributed by Arg-490. An ATP-binding site is contributed by 535-538 (GIDR).

The protein belongs to the class-II aminoacyl-tRNA synthetase family. Type 1 subfamily. As to quaternary structure, homodimer.

It localises to the cytoplasm. It catalyses the reaction tRNA(Asx) + L-aspartate + ATP = L-aspartyl-tRNA(Asx) + AMP + diphosphate. In terms of biological role, aspartyl-tRNA synthetase with relaxed tRNA specificity since it is able to aspartylate not only its cognate tRNA(Asp) but also tRNA(Asn). Reaction proceeds in two steps: L-aspartate is first activated by ATP to form Asp-AMP and then transferred to the acceptor end of tRNA(Asp/Asn). The protein is Aspartate--tRNA(Asp/Asn) ligase of Brachyspira hyodysenteriae (strain ATCC 49526 / WA1).